The sequence spans 147 residues: NADH-quinone oxidoreductase subunit A (147 aa).

The next 3 helical transmembrane spans lie at 16–36 (FAIF…GGWF), 68–88 (FYLV…LFAW), and 98–118 (VGFV…VYLV).

It belongs to the complex I subunit 3 family. As to quaternary structure, NDH-1 is composed of 13 different subunits. Subunits NuoA, H, J, K, L, M, N constitute the membrane sector of the complex.

Its subcellular location is the cell inner membrane. The enzyme catalyses a quinone + NADH + 5 H(+)(in) = a quinol + NAD(+) + 4 H(+)(out). Its function is as follows. NDH-1 shuttles electrons from NADH, via FMN and iron-sulfur (Fe-S) centers, to quinones in the respiratory chain. The immediate electron acceptor for the enzyme in this species is believed to be ubiquinone. Couples the redox reaction to proton translocation (for every two electrons transferred, four hydrogen ions are translocated across the cytoplasmic membrane), and thus conserves the redox energy in a proton gradient. This chain is NADH-quinone oxidoreductase subunit A, found in Shigella boydii serotype 18 (strain CDC 3083-94 / BS512).